We begin with the raw amino-acid sequence, 251 residues long: Low molecular mass lipoprotein PBMHPC-21 (251 aa).

A signal peptide spans 1–16; sequence MKFVVVFASCVLAVSA.

This sequence belongs to the 30 kDa lipoprotein family.

The protein localises to the secreted. This is Low molecular mass lipoprotein PBMHPC-21 from Bombyx mori (Silk moth).